The chain runs to 212 residues: MAEEQKIALESESPAKVTTPAPADTPAPAPAEIPAPAPAPTPADVTKDVAEEKIQNPPPEQIFDDSKALTVVEKPVEEPAPAKPASASLDRDVKLADLSKEKRLSFVRAWEESEKSKAENKAEKKIADVHAWENSKKAAVEAQLKKIEEQLEKKKAEYAERMKNKVAAIHKEAEERRAMIEAKRGEDVLKAEETAAKYRATGIVPKATCGCF.

The disordered stretch occupies residues 1–88; sequence MAEEQKIALE…PAPAKPASAS (88 aa). Ser-13 bears the Phosphoserine mark. A compositionally biased stretch (pro residues) spans 23–41; it reads ADTPAPAPAEIPAPAPAPT. Residues 45–54 are compositionally biased toward basic and acidic residues; sequence VTKDVAEEKI.

This sequence belongs to the remorin family.

The protein resides in the cell membrane. This is an uncharacterized protein from Arabidopsis thaliana (Mouse-ear cress).